Here is a 275-residue protein sequence, read N- to C-terminus: Large ribosomal subunit protein uL2 (275 aa).

Residues 224 to 275 form a disordered region; it reads AMNPVDHPHGGGEGKAPIGHPGPLTPWGKPALGYKTRKKGKASDKFIVKRRK. Basic and acidic residues predominate over residues 264-275; the sequence is KASDKFIVKRRK.

Belongs to the universal ribosomal protein uL2 family. As to quaternary structure, part of the 50S ribosomal subunit. Forms a bridge to the 30S subunit in the 70S ribosome.

Its function is as follows. One of the primary rRNA binding proteins. Required for association of the 30S and 50S subunits to form the 70S ribosome, for tRNA binding and peptide bond formation. It has been suggested to have peptidyltransferase activity; this is somewhat controversial. Makes several contacts with the 16S rRNA in the 70S ribosome. The polypeptide is Large ribosomal subunit protein uL2 (Caldanaerobacter subterraneus subsp. tengcongensis (strain DSM 15242 / JCM 11007 / NBRC 100824 / MB4) (Thermoanaerobacter tengcongensis)).